Consider the following 329-residue polypeptide: Malate dehydrogenase (329 aa).

Residue 12-18 (GAAGQIG) coordinates NAD(+). Substrate contacts are provided by Arg-95 and Arg-101. NAD(+) contacts are provided by residues Asn-108, Gln-115, and 132-134 (VGN). Residues Asn-134 and Arg-165 each coordinate substrate. His-190 functions as the Proton acceptor in the catalytic mechanism.

It belongs to the LDH/MDH superfamily. MDH type 2 family.

The enzyme catalyses (S)-malate + NAD(+) = oxaloacetate + NADH + H(+). Its function is as follows. Catalyzes the reversible oxidation of malate to oxaloacetate. This Polynucleobacter asymbioticus (strain DSM 18221 / CIP 109841 / QLW-P1DMWA-1) (Polynucleobacter necessarius subsp. asymbioticus) protein is Malate dehydrogenase.